A 214-amino-acid polypeptide reads, in one-letter code: 3-demethoxyubiquinol 3-hydroxylase (214 aa).

Positions 63, 93, 96, 145, 177, and 180 each coordinate Fe cation.

Belongs to the COQ7 family. Fe cation serves as cofactor.

The protein resides in the cell membrane. The catalysed reaction is a 5-methoxy-2-methyl-3-(all-trans-polyprenyl)benzene-1,4-diol + AH2 + O2 = a 3-demethylubiquinol + A + H2O. It participates in cofactor biosynthesis; ubiquinone biosynthesis. In terms of biological role, catalyzes the hydroxylation of 2-nonaprenyl-3-methyl-6-methoxy-1,4-benzoquinol during ubiquinone biosynthesis. The sequence is that of 3-demethoxyubiquinol 3-hydroxylase from Nitrosococcus oceani (strain ATCC 19707 / BCRC 17464 / JCM 30415 / NCIMB 11848 / C-107).